The following is a 535-amino-acid chain: CTP synthase (535 aa).

The segment at 1–266 is amidoligase domain; that stretch reads MKTKFIFITG…DERVVEKLNI (266 aa). Ser14 contacts CTP. Position 14 (Ser14) interacts with UTP. Residues 15–20 and Asp72 contribute to the ATP site; that span reads SIGKGL. Mg(2+) is bound by residues Asp72 and Glu140. Residues 147–149, 187–192, and Lys223 each bind CTP; these read DIE and KTKPTQ. UTP-binding positions include 187 to 192 and Lys223; that span reads KTKPTQ. Residues 292-534 form the Glutamine amidotransferase type-1 domain; the sequence is RIAIVGKYVN…VRAALIQRDA (243 aa). Gly354 is an L-glutamine binding site. Residue Cys381 is the Nucleophile; for glutamine hydrolysis of the active site. Residues 382–385, Glu405, and Arg462 each bind L-glutamine; that span reads LGMQ. Active-site residues include His507 and Glu509.

The protein belongs to the CTP synthase family. In terms of assembly, homotetramer.

It carries out the reaction UTP + L-glutamine + ATP + H2O = CTP + L-glutamate + ADP + phosphate + 2 H(+). The enzyme catalyses L-glutamine + H2O = L-glutamate + NH4(+). It catalyses the reaction UTP + NH4(+) + ATP = CTP + ADP + phosphate + 2 H(+). It participates in pyrimidine metabolism; CTP biosynthesis via de novo pathway; CTP from UDP: step 2/2. Its activity is regulated as follows. Allosterically activated by GTP, when glutamine is the substrate; GTP has no effect on the reaction when ammonia is the substrate. The allosteric effector GTP functions by stabilizing the protein conformation that binds the tetrahedral intermediate(s) formed during glutamine hydrolysis. Inhibited by the product CTP, via allosteric rather than competitive inhibition. In terms of biological role, catalyzes the ATP-dependent amination of UTP to CTP with either L-glutamine or ammonia as the source of nitrogen. Regulates intracellular CTP levels through interactions with the four ribonucleotide triphosphates. The sequence is that of CTP synthase from Pelobacter propionicus (strain DSM 2379 / NBRC 103807 / OttBd1).